We begin with the raw amino-acid sequence, 331 residues long: FMRFamide-related neuropeptides (331 aa).

An N-terminal signal peptide occupies residues 1–25; that stretch reads MRCWSPCSLLVVIVIYCLSSHTSEA. The propeptide occupies 26–65; it reads FDLAQACVESQRLSLLPICDTIFAVQQEGAQQSADDGMRS. Phenylalanine amide is present on residues phenylalanine 71 and phenylalanine 83. A propeptide spanning residues 86–94 is cleaved from the precursor; sequence NVPDLPFED. Phenylalanine 100 bears the Phenylalanine amide mark. The propeptide occupies 103–168; the sequence is AAPQLDDLLK…YIDDVEDSDV (66 aa). The tract at residues 122–158 is disordered; it reads QKADETSVRRKRSTDAAPQNNAENPEQKNDSAKITKR. Over residues 146–158 the composition is skewed to basic and acidic residues; it reads PEQKNDSAKITKR. Phenylalanine amide is present on residues phenylalanine 174 and phenylalanine 181. Positions 184–194 are excised as a propeptide; the sequence is NPSDAGNKLTE. Phenylalanine amide is present on phenylalanine 200. Residues 203–205 constitute a propeptide that is removed on maturation; it reads DPE. Phenylalanine 211 bears the Phenylalanine amide mark. The propeptide occupies 214–216; it reads SDD. Residue phenylalanine 222 is modified to Phenylalanine amide. Positions 225-236 are excised as a propeptide; that stretch reads NPSDVEDELEED. Phenylalanine 242 carries the post-translational modification Phenylalanine amide. A propeptide spanning residues 245–254 is cleaved from the precursor; sequence GGEDDEEEAE. Position 260 is a phenylalanine amide (phenylalanine 260). Residues 263 to 265 constitute a propeptide that is removed on maturation; sequence DPE. At phenylalanine 271 the chain carries Phenylalanine amide. Positions 274-277 are excised as a propeptide; sequence SGED. Positions 282–296 are enriched in basic and acidic residues; that stretch reads RFGRNPDEQEADKRF. Residues 282 to 310 are disordered; that stretch reads RFGRNPDEQEADKRFMRFGRGGEDDEVST. Residue phenylalanine 283 is modified to Phenylalanine amide. The propeptide occupies 286-293; sequence NPDEQEAD. Position 299 is a phenylalanine amide (phenylalanine 299). Residues 302–312 constitute a propeptide that is removed on maturation; that stretch reads GGEDDEVSTED. A Phenylalanine amide modification is found at phenylalanine 318. Residues 321-331 constitute a propeptide that is removed on maturation; the sequence is SADKCKGCLEG.

Belongs to the FARP (FMRFamide related peptide) family.

It is found in the secreted. Its function is as follows. Excitatory neurotransmitters that directly modulate chromatophore function by activating chromatophore expansion at the chromatophore neuromuscular junction. The protein is FMRFamide-related neuropeptides of Doryteuthis pealeii (Longfin inshore squid).